The following is a 384-amino-acid chain: Outer membrane protein assembly factor BamB (384 aa).

Positions 1–16 are cleaved as a signal peptide; it reads MKIRILVLILCALTQG. The N-palmitoyl cysteine moiety is linked to residue C17. C17 carries the S-diacylglycerol cysteine lipid modification.

Belongs to the BamB family. As to quaternary structure, part of the Bam complex.

The protein localises to the cell outer membrane. In terms of biological role, part of the outer membrane protein assembly complex, which is involved in assembly and insertion of beta-barrel proteins into the outer membrane. The chain is Outer membrane protein assembly factor BamB from Legionella pneumophila (strain Paris).